A 400-amino-acid chain; its full sequence is Spermatogenic leucine zipper protein 1 (400 aa).

The segment at 1–27 (MADSDSSSEMPAHSPSPSPIPCAKQKP) is disordered. Ser-106 carries the phosphoserine modification. Residues 116–127 (RNKLRFKDDLFI) form a helix-loop-helix motif region. A basic motif region spans residues 128–193 (HFDPERENTM…HIRGEYRKLR (66 aa)). Coiled-coil stretches lie at residues 182-231 (SVHI…KDIV) and 268-293 (LIAALLENECQILQQRVDILRELHLH). Position 207 is a phosphoserine (Ser-207). Residues 252–273 (LEEQVKKLSQDTHSLHLIAALL) form a leucine-zipper region. The segment at 295–332 (AGPGHEKPLQTSGEQDKKCGEQDKKCGEQDKKCGEQDK) is disordered.

As to quaternary structure, interacts with PPP1CC isoform gamma-2. Phosphorylated by MAPK1/ERK2 and MAPK3/ERK1.

It localises to the cytoplasm. The protein localises to the nucleus. In terms of biological role, transcription factor that binds to the DNA sequence 5'-CANNTG-3'(E box) and the G-box motif. May play an important role in the regulation of cell proliferation and differentiation during spermatogenesis. The protein is Spermatogenic leucine zipper protein 1 (Spz1) of Rattus norvegicus (Rat).